A 377-amino-acid polypeptide reads, in one-letter code: Phospho-N-acetylmuramoyl-pentapeptide-transferase (377 aa).

Helical transmembrane passes span 27-47 (TAFASLTALLIALLIGPYVIE), 71-91 (GTPTMGGVLICIAILLPTLLW), 94-114 (LSDPFVWIVMLSTLAFGAIGF), 139-159 (ILASAAIGVALVVLQGQGSYS), 182-202 (VPHLAYFAFIPFVIFVIIVIV), 216-236 (GLAIGCTIIAAGALTVLTYVS), 252-272 (MVGEVTIFCGAMVGASIGFLW), 280-300 (IFMGDVGSLALGGAIATVAVV), 305-325 (LLLPFIGGIFVLEALSVILQV), and 354-374 (KVIVRFWIAALVFALFALTTL).

The protein belongs to the glycosyltransferase 4 family. MraY subfamily. Requires Mg(2+) as cofactor.

It localises to the cell inner membrane. It catalyses the reaction UDP-N-acetyl-alpha-D-muramoyl-L-alanyl-gamma-D-glutamyl-meso-2,6-diaminopimeloyl-D-alanyl-D-alanine + di-trans,octa-cis-undecaprenyl phosphate = di-trans,octa-cis-undecaprenyl diphospho-N-acetyl-alpha-D-muramoyl-L-alanyl-D-glutamyl-meso-2,6-diaminopimeloyl-D-alanyl-D-alanine + UMP. It participates in cell wall biogenesis; peptidoglycan biosynthesis. Catalyzes the initial step of the lipid cycle reactions in the biosynthesis of the cell wall peptidoglycan: transfers peptidoglycan precursor phospho-MurNAc-pentapeptide from UDP-MurNAc-pentapeptide onto the lipid carrier undecaprenyl phosphate, yielding undecaprenyl-pyrophosphoryl-MurNAc-pentapeptide, known as lipid I. The chain is Phospho-N-acetylmuramoyl-pentapeptide-transferase from Acidobacterium capsulatum (strain ATCC 51196 / DSM 11244 / BCRC 80197 / JCM 7670 / NBRC 15755 / NCIMB 13165 / 161).